A 211-amino-acid chain; its full sequence is Redox-sensing transcriptional repressor Rex (211 aa).

Positions 17–56 (KYHRYLEELLRNEVDRISSKELSKKIGFTASQIRQDFNCF) form a DNA-binding region, H-T-H motif. 91–96 (GGGNIG) lines the NAD(+) pocket.

Belongs to the transcriptional regulatory Rex family. Homodimer.

Its subcellular location is the cytoplasm. Functionally, modulates transcription in response to changes in cellular NADH/NAD(+) redox state. The protein is Redox-sensing transcriptional repressor Rex of Clostridium tetani (strain Massachusetts / E88).